The sequence spans 56 residues: Large ribosomal subunit protein bL32 (56 aa).

The tract at residues 1–35 (MAVQQNKSTRSKRGMRRSHHALRSVTISVDRTSGE) is disordered. Basic residues predominate over residues 9 to 22 (TRSKRGMRRSHHAL).

This sequence belongs to the bacterial ribosomal protein bL32 family.

In Blochmanniella pennsylvanica (strain BPEN), this protein is Large ribosomal subunit protein bL32.